Consider the following 642-residue polypeptide: Putative ATP-binding protein YdiF (642 aa).

2 consecutive ABC transporter domains span residues 4-259 (LQVN…EKDL) and 327-541 (LRVQ…ELEK). ATP-binding positions include 36–43 (GRNGAGKS) and 360–367 (GPNGIGKS). Basic and acidic residues-rich tracts occupy residues 541–550 (KMNQQEETDK) and 557–567 (SDSKRSYEEEK). Positions 541-567 (KMNQQEETDKTPATVKSDSKRSYEEEK) are disordered.

The protein belongs to the ABC transporter superfamily. ABCF family. YdiF subfamily.

The polypeptide is Putative ATP-binding protein YdiF (ydiF) (Bacillus subtilis (strain 168)).